Here is a 139-residue protein sequence, read N- to C-terminus: Galactoside-binding soluble lectin 13 (139 aa).

Residues 6–138 (VPYKLPVSLS…DISLTSVCVC (133 aa)) enclose the Galectin domain.

In terms of assembly, homodimer; disulfide-linked. In terms of tissue distribution, detected in adult and fetal spleen, fetal kidney, adult urinary bladder and placenta. Placental expression originates predominantly from the syncytiotrophoblast.

The protein localises to the cytoplasm. The protein resides in the nucleus matrix. In terms of biological role, binds beta-galactoside and lactose. Strong inducer of T-cell apoptosis. Has hemagglutinating activity towards chicken erythrocytes. This chain is Galactoside-binding soluble lectin 13 (LGALS13), found in Homo sapiens (Human).